The sequence spans 139 residues: Lysozyme (139 aa).

The first 19 residues, 1-19 (MTKYVILLAVLAFALHCDA), serve as a signal peptide directing secretion. One can recognise a C-type lysozyme domain in the interval 20–139 (KRFTRCGLVQ…QHGLPDISDC (120 aa)). 4 cysteine pairs are disulfide-bonded: cysteine 25–cysteine 139, cysteine 46–cysteine 129, cysteine 81–cysteine 95, and cysteine 91–cysteine 109. Residues glutamate 51 and aspartate 69 contribute to the active site.

Belongs to the glycosyl hydrolase 22 family.

It catalyses the reaction Hydrolysis of (1-&gt;4)-beta-linkages between N-acetylmuramic acid and N-acetyl-D-glucosamine residues in a peptidoglycan and between N-acetyl-D-glucosamine residues in chitodextrins.. Functionally, lysozymes have primarily a bacteriolytic function; those in tissues and body fluids are associated with the monocyte-macrophage system and enhance the activity of immunoagents. In Hyalophora cecropia (Cecropia moth), this protein is Lysozyme.